A 601-amino-acid polypeptide reads, in one-letter code: Elongation factor 4 (601 aa).

One can recognise a tr-type G domain in the interval 7 to 189; that stretch reads KNIRNFSIVA…AIVTRLPPPQ (183 aa). GTP-binding positions include 19 to 24 and 136 to 139; these read DHGKST and NKID.

It belongs to the TRAFAC class translation factor GTPase superfamily. Classic translation factor GTPase family. LepA subfamily.

Its subcellular location is the cell inner membrane. The enzyme catalyses GTP + H2O = GDP + phosphate + H(+). Functionally, required for accurate and efficient protein synthesis under certain stress conditions. May act as a fidelity factor of the translation reaction, by catalyzing a one-codon backward translocation of tRNAs on improperly translocated ribosomes. Back-translocation proceeds from a post-translocation (POST) complex to a pre-translocation (PRE) complex, thus giving elongation factor G a second chance to translocate the tRNAs correctly. Binds to ribosomes in a GTP-dependent manner. The protein is Elongation factor 4 of Methylocella silvestris (strain DSM 15510 / CIP 108128 / LMG 27833 / NCIMB 13906 / BL2).